We begin with the raw amino-acid sequence, 117 residues long: Ribosome-binding factor A (117 aa).

It belongs to the RbfA family. In terms of assembly, monomer. Binds 30S ribosomal subunits, but not 50S ribosomal subunits or 70S ribosomes.

The protein localises to the cytoplasm. Functionally, one of several proteins that assist in the late maturation steps of the functional core of the 30S ribosomal subunit. Associates with free 30S ribosomal subunits (but not with 30S subunits that are part of 70S ribosomes or polysomes). Required for efficient processing of 16S rRNA. May interact with the 5'-terminal helix region of 16S rRNA. The protein is Ribosome-binding factor A of Leuconostoc mesenteroides subsp. mesenteroides (strain ATCC 8293 / DSM 20343 / BCRC 11652 / CCM 1803 / JCM 6124 / NCDO 523 / NBRC 100496 / NCIMB 8023 / NCTC 12954 / NRRL B-1118 / 37Y).